The following is a 565-amino-acid chain: DNA-binding protein scr1 (565 aa).

Polar residues predominate over residues M1–N19. Residues M1–P25 form a disordered region. 2 C2H2-type zinc fingers span residues Y26–H48 and H54–H78. Disordered regions lie at residues T79–T119, S261–S303, R390–S434, and A466–P565. The span at N80–S102 shows a compositional bias: low complexity. 3 stretches are compositionally biased toward polar residues: residues E108 to T119, L276 to H286, and G294 to S303. Residues P391–P413 are compositionally biased toward low complexity. A compositionally biased stretch (polar residues) spans A466–P478. Low complexity-rich tracts occupy residues S479–S492, F517–S526, and S537–S555.

This sequence belongs to the creA/MIG C2H2-type zinc-finger protein family.

The protein resides in the nucleus. In terms of biological role, involved in carbon catabolite repression. Represses the transcription of various genes including the inv1 gene. The chain is DNA-binding protein scr1 (scr1) from Schizosaccharomyces pombe (strain 972 / ATCC 24843) (Fission yeast).